Consider the following 527-residue polypeptide: Bifunctional purine biosynthesis protein PurH (527 aa).

The MGS-like domain maps to 1–149 (MASDFLPVRR…KNFARVAVAT (149 aa)).

The protein belongs to the PurH family.

The enzyme catalyses (6R)-10-formyltetrahydrofolate + 5-amino-1-(5-phospho-beta-D-ribosyl)imidazole-4-carboxamide = 5-formamido-1-(5-phospho-D-ribosyl)imidazole-4-carboxamide + (6S)-5,6,7,8-tetrahydrofolate. The catalysed reaction is IMP + H2O = 5-formamido-1-(5-phospho-D-ribosyl)imidazole-4-carboxamide. The protein operates within purine metabolism; IMP biosynthesis via de novo pathway; 5-formamido-1-(5-phospho-D-ribosyl)imidazole-4-carboxamide from 5-amino-1-(5-phospho-D-ribosyl)imidazole-4-carboxamide (10-formyl THF route): step 1/1. Its pathway is purine metabolism; IMP biosynthesis via de novo pathway; IMP from 5-formamido-1-(5-phospho-D-ribosyl)imidazole-4-carboxamide: step 1/1. The chain is Bifunctional purine biosynthesis protein PurH from Xanthomonas euvesicatoria pv. vesicatoria (strain 85-10) (Xanthomonas campestris pv. vesicatoria).